We begin with the raw amino-acid sequence, 157 residues long: Transcription initiation factor IIA large subunit (157 aa).

Belongs to the TFIIA subunit 1 family. TFIIA is a heterodimer of the large subunit and the small subunit gamma.

The protein resides in the nucleus. Its function is as follows. TFIIA is a component of the transcription machinery of RNA polymerase II and plays an important role in transcriptional activation. This chain is Transcription initiation factor IIA large subunit (TOA1), found in Encephalitozoon cuniculi (strain GB-M1) (Microsporidian parasite).